The following is a 187-amino-acid chain: Ras-like protein rasD (187 aa).

Position 10–17 (10–17 (GGGGVGKS)) interacts with GTP. Positions 32-40 (YDPTIEDSY) match the Effector region motif. Residues 57–61 (DTAGQ) and 116–119 (NKAD) each bind GTP. Cysteine 184 is modified (cysteine methyl ester). Cysteine 184 is lipidated: S-geranylgeranyl cysteine. The propeptide at 185–187 (LIL) is removed in mature form.

The protein belongs to the small GTPase superfamily. Ras family.

It localises to the cell membrane. It catalyses the reaction GTP + H2O = GDP + phosphate + H(+). With respect to regulation, alternates between an inactive form bound to GDP and an active form bound to GTP. Activated by a guanine nucleotide-exchange factor (GEF) and inactivated by a GTPase-activating protein (GAP). In terms of biological role, ras proteins bind GDP/GTP and possess intrinsic GTPase activity. The chain is Ras-like protein rasD (rasD) from Dictyostelium discoideum (Social amoeba).